The sequence spans 420 residues: Histidine--tRNA ligase (420 aa).

The protein belongs to the class-II aminoacyl-tRNA synthetase family. Homodimer.

It is found in the cytoplasm. It catalyses the reaction tRNA(His) + L-histidine + ATP = L-histidyl-tRNA(His) + AMP + diphosphate + H(+). The polypeptide is Histidine--tRNA ligase (Macrococcus caseolyticus (strain JCSC5402) (Macrococcoides caseolyticum)).